Reading from the N-terminus, the 734-residue chain is Serine protease FAM111B (734 aa).

Residue M1 is modified to N-acetylmethionine. Composition is skewed to basic and acidic residues over residues 1-10 (MNSMKTEENK) and 17-32 (DDQR…TVMK). Positions 1–32 (MNSMKTEENKSFSAMEDDQRTRPEVSKDTVMK) are disordered. Residue K284 forms a Glycyl lysine isopeptide (Lys-Gly) (interchain with G-Cter in SUMO2) linkage. Positions 285–321 (QNESATDEINHQSLIQSKKKVHKPKKDGETKDVEHSR) are disordered. A compositionally biased stretch (basic and acidic residues) spans 310-321 (KDGETKDVEHSR). Residues H490, D544, and S650 each act as charge relay system in the active site. Residues 712-734 (TYDEEKGKQESSLQDHQIEPMEC) are disordered.

This sequence belongs to the FAM111 family. As to expression, widely expressed.

Functionally, serine protease. The protein is Serine protease FAM111B of Homo sapiens (Human).